Consider the following 210-residue polypeptide: Heart- and neural crest derivatives-expressed protein 2 (210 aa).

Positions 81 to 101 (SGAGGLMQRPVKRRGTANRKE) are disordered. Over residues 90–101 (PVKRRGTANRKE) the composition is skewed to basic residues. Positions 92 to 144 (KRRGTANRKERRRTISINSAFAELRECIPNVPADTKLSKIKTLRLATSYIAYL) constitute a bHLH domain.

In terms of assembly, efficient DNA binding requires dimerization with another bHLH protein. Heart, liver and spleen.

The protein localises to the nucleus. Its function is as follows. Essential for cardiac morphogenesis and for the development of branchial arches. Binds DNA on E-box consensus sequence 5'-CANNTG-3'. This Xenopus laevis (African clawed frog) protein is Heart- and neural crest derivatives-expressed protein 2 (hand2).